Reading from the N-terminus, the 341-residue chain is HTH-type transcriptional repressor PurR (341 aa).

Residues 2–56 (ATIKDVAKRANVSTTTVSHVINKTRFVAEETRNAVWAAIKELHYSPSAVARSLKV) enclose the HTH lacI-type domain. Positions 4–23 (IKDVAKRANVSTTTVSHVIN) form a DNA-binding region, H-T-H motif. The DNA-binding element occupies 48-56 (SAVARSLKV). Residues Tyr-73, Arg-190, Thr-192, Phe-221, and Asp-275 each coordinate hypoxanthine.

As to quaternary structure, homodimer.

It functions in the pathway purine metabolism; purine nucleotide biosynthesis [regulation]. Its function is as follows. Is the main repressor of the genes involved in the de novo synthesis of purine nucleotides, regulating purB, purC, purEK, purF, purHD, purL, purMN and guaBA expression. PurR is allosterically activated to bind its cognate DNA by binding the purine corepressors, hypoxanthine or guanine, thereby effecting transcription repression. The sequence is that of HTH-type transcriptional repressor PurR from Salmonella arizonae (strain ATCC BAA-731 / CDC346-86 / RSK2980).